A 115-amino-acid polypeptide reads, in one-letter code: SOSS complex subunit C homolog (115 aa).

This sequence belongs to the SOSS-C family.

The polypeptide is SOSS complex subunit C homolog (Drosophila grimshawi (Hawaiian fruit fly)).